A 361-amino-acid polypeptide reads, in one-letter code: Peptide chain release factor 1 (361 aa).

Q235 bears the N5-methylglutamine mark.

It belongs to the prokaryotic/mitochondrial release factor family. In terms of processing, methylated by PrmC. Methylation increases the termination efficiency of RF1.

Its subcellular location is the cytoplasm. Peptide chain release factor 1 directs the termination of translation in response to the peptide chain termination codons UAG and UAA. In Xanthomonas campestris pv. campestris (strain B100), this protein is Peptide chain release factor 1.